Here is a 187-residue protein sequence, read N- to C-terminus: Large ribosomal subunit protein bL17 (187 aa).

The disordered stretch occupies residues 122-187; sequence PKVRSSRTST…EADAAEKSDK (66 aa). Low complexity predominate over residues 127-144; that stretch reads SRTSTATAPAAAAPAAEA. Acidic residues-rich tracts occupy residues 145 to 157 and 165 to 180; these read PAEE…EETD and TPAE…VEAD.

Belongs to the bacterial ribosomal protein bL17 family. Part of the 50S ribosomal subunit. Contacts protein L32.

This chain is Large ribosomal subunit protein bL17, found in Clavibacter michiganensis subsp. michiganensis (strain NCPPB 382).